The following is a 349-amino-acid chain: DCD domain-containing protein NRP (349 aa).

Residues 157-201 (NNNKNKGIDEDHQIQKGGKKNRKNQQNNNNQRNEDDKNNGLDKRF) are disordered. Basic and acidic residues predominate over residues 188-201 (RNEDDKNNGLDKRF). Residues 214-346 (ETIGGYIFVC…VLSLLDIFAD (133 aa)) enclose the DCD domain.

Interacts with CRY2 in the cytoplasm. Interacts with Verticillium dahliae PevD1. Interacts with FYPP3. Highly expressed in sensecent leaves, cauline leaves and sepals. Expressed in the shoot apical meristem, leaf veins, central cylinder, root hair zone, root tips, rosette leaves, flowers and siliques.

The protein localises to the cytoplasm. Functionally, contributes to the initial phase of responses to abiotic and biotic stress signals. Binds FYPP3 and facilitates FYPP3 degradation to promote abscisic acid (ABA) response. This Arabidopsis thaliana (Mouse-ear cress) protein is DCD domain-containing protein NRP.